The primary structure comprises 223 residues: uncharacterized protein (223 aa).

Residues 1–30 form a disordered region; that stretch reads MASATVRNVPLLDDDTIPFGEEDEMRDPSR. Acidic residues predominate over residues 12–25; sequence LDDDTIPFGEEDEM. The next 4 membrane-spanning stretches (helical) occupy residues 35–55, 56–76, 129–149, and 154–174; these read YTHP…ILIY, MFCG…VLFL, IFWL…LFAL, and FKWL…LYGY.

It belongs to the TVP23 family.

It is found in the membrane. This is an uncharacterized protein from Drosophila melanogaster (Fruit fly).